Reading from the N-terminus, the 2432-residue chain is Polyprotein P1234 (2432 aa).

Residues 29 to 260 (ESLQVTPNDH…ESRKLLRSWH (232 aa)) enclose the Alphavirus-like MT domain. Residues 245-264 (GSTLYTESRKLLRSWHLPSV) are nsP1 membrane-binding. 2 S-palmitoyl cysteine; by host lipidation sites follow: Cys-418 and Cys-420. Residues 692–844 (ELTNPPFHEF…HNICTEVCHK (153 aa)) enclose the (+)RNA virus helicase ATP-binding domain. 723–730 (GVPGSGKS) is a binding site for a ribonucleoside 5'-triphosphate. Positions 845-993 (SISRRCTRPV…LEEWQEEHDK (149 aa)) constitute a (+)RNA virus helicase C-terminal domain. A Peptidase C9 domain is found at 1006–1329 (DAFQNKANVC…TKLSAVYAGE (324 aa)). The segment at 1007–1026 (AFQNKANVCWAKSLVPVLDT) is nucleolus localization signal. Cys-1015 functions as the For cysteine protease nsP2 activity in the catalytic mechanism. The Nuclear export signal motif lies at 1060–1069 (TKYYGVDLDS). His-1085 serves as the catalytic For cysteine protease nsP2 activity. Residues 1184-1188 (PRRRV) carry the Nuclear localization signal motif. A Macro domain is found at 1337-1495 (APSYRVKRAD…KKIQEAIDMR (159 aa)). Asp-1346, Asn-1360, Gly-1368, Gly-1448, Val-1449, and Phe-1450 together coordinate ADP-D-ribose. Residues Cys-1598, Cys-1600, Cys-1623, and Cys-1641 each coordinate Zn(2+). Phosphothreonine; by host occurs at positions 1680 and 1681. A disordered region spans residues 1759–1779 (RAAERPVPAPRKPTPAPRTAF). A compositionally biased stretch (pro residues) spans 1765 to 1774 (VPAPRKPTPA). 2 short sequence motifs (FGDF; binding to host G3BP1) span residues 1787-1790 (FGDF) and 1804-1807 (FGDF). One can recognise a RdRp catalytic domain in the interval 2182-2297 (GDPVLETDIA…VHGVISDKLM (116 aa)).

As to quaternary structure, interacts with non-structural protein 3. Interacts with RNA-directed RNA polymerase nsP4. Interacts with protease nsP2. interacts with itself. In terms of assembly, interacts with mRNA-capping enzyme nsP1. Interacts with host DDX1. Interacts with host DDX3. Interacts (via C-terminus) with host G3BP1; this interaction inhibits the formation of host stress granules on viral mRNAs and the nsp3-G3BP1 complexes bind viral RNAs and probably orchestrate the assembly of viral replication complexes. Interacts (via C-terminus) with host G3BP2; this interaction inhibits the formation of host stress granules on viral mRNAs and the nsp3-G3BP2 complexes bind viral RNAs and probably orchestrate the assembly of viral replication complexes. Interacts with mRNA-capping enzyme nsP1. Interacts with protease nsP2. interacts with itself. As to quaternary structure, interacts with RNA-directed RNA polymerase nsP4. Interacts with mRNA-capping enzyme nsP1. Interacts with KPNA1/karyopherin-alpha1; this interaction probably allows the active transport of protease nsP2 into the host nucleus. The cofactor is Mg(2+). Mn(2+) serves as cofactor. In terms of processing, specific enzymatic cleavages in vivo yield mature proteins. The processing of the polyprotein is temporally regulated. In early stages (1.7 hpi), P1234 is first cleaved in trans through its nsP2 protease activity, releasing P123' and nsP4, which associate to form the early replication complex. At the same time, P1234 is also cut at the nsP1/nsP2 site early in infection but with lower efficiency. After replication of the viral minus-strand RNAs (4 hpi), the polyproteins are cut at the nsP1/nsP2 and nsP2/nsP3 sites very efficiently, preventing accumulation of P123' and P1234 and allowing the formation of the late replication complex. NsP3'/nsP4 site is not cleaved anymore and P34 is produced rather than nsP4. Post-translationally, specific enzymatic cleavages in vivo yield mature proteins. The processing of the polyprotein is temporally regulated. In early stages (1.7 hpi), P123' is cleaved at the nsP1/nsP2 site with low efficiency. After replication of the viral minus-strand RNAs (4 hpi), the polyproteins are cut at the nsP1/nsP2 and nsP2/nsP3 sites very efficiently, preventing accumulation of P123' and allowing the formation of the late replication complex. Specific enzymatic cleavages in vivo yield mature proteins. The processing of the polyprotein is temporally regulated. In early stages (1.7 hpi), P123 is cleaved at the nsP1/nsP2 site with low efficiency. After replication of the viral minus-strand RNAs (4 hpi), the polyproteins are cut at the nsP1/nsP2 and nsP2/nsP3 sites very efficiently, preventing accumulation of P123 and allowing the formation of the late replication complex. In terms of processing, palmitoylated by host palmitoyltransferases ZDHHC2 and ZDHHC19. Post-translationally, phosphorylated by host on serines and threonines. Ubiquitinated; targets the protein for rapid degradation via the ubiquitin system. Nsp4 is present in extremely low quantities due to low frequency of translation through the amber stop-codon and the degradation by the ubiquitin pathway.

It localises to the host cytoplasmic vesicle membrane. It is found in the host cell membrane. Its subcellular location is the host cell projection. The protein localises to the host filopodium. The protein resides in the host nucleus. It localises to the host cytoplasm. The enzyme catalyses GTP + S-adenosyl-L-methionine = N(7)-methyl-GTP + S-adenosyl-L-homocysteine. It catalyses the reaction N(7)-methyl-GTP + L-histidyl-[protein] = N(tele)-(N(7)-methylguanosine 5'-phospho)-L-histidyl-[protein] + diphosphate. The catalysed reaction is N(tele)-(N(7)-methylguanosine 5'-phospho)-L-histidyl-[protein] + a 5'-end diphospho-(purine-ribonucleoside) in mRNA + H(+) = a 5'-end (N(7)-methyl 5'-triphosphoguanosine)-(purine-ribonucleoside) in mRNA + L-histidyl-[protein]. It carries out the reaction a 5'-end triphospho-ribonucleoside in mRNA + H2O = a 5'-end diphospho-ribonucleoside in mRNA + phosphate + H(+). The enzyme catalyses a ribonucleoside 5'-triphosphate + H2O = a ribonucleoside 5'-diphosphate + phosphate + H(+). It catalyses the reaction ATP + H2O = ADP + phosphate + H(+). The catalysed reaction is RNA(n) + a ribonucleoside 5'-triphosphate = RNA(n+1) + diphosphate. It carries out the reaction RNA(n) + ATP = RNA(n)-3'-adenine ribonucleotide + diphosphate. The enzyme catalyses 4-O-(ADP-D-ribosyl)-L-aspartyl-[protein] + H2O = L-aspartyl-[protein] + ADP-D-ribose + H(+). It catalyses the reaction 5-O-(ADP-D-ribosyl)-L-glutamyl-[protein] + H2O = L-glutamyl-[protein] + ADP-D-ribose + H(+). The catalysed reaction is ADP-alpha-D-ribose 1''-phosphate + H2O = ADP-D-ribose + phosphate. Its activity is regulated as follows. Inhibited by N-ethylmaleimide, Zn(2+), and Cu2(2+). Functionally, inactive precursor of the viral replicase, which is activated by cleavages carried out by the viral protease nsP2. In terms of biological role, the early replication complex formed by the polyprotein P123 and nsP4 synthesizes minus-strand RNAs. As soon P123 is cleaved into mature proteins, the plus-strand RNAs synthesis begins. Its function is as follows. The early replication complex formed by the polyprotein P123' and nsP4 synthesizes minus-strand RNAs. Polyprotein P123' is a short-lived polyprotein that accumulates during early stage of infection. As soon P123' is cleaved into mature proteins, the plus-strand RNAs synthesis begins. Cytoplasmic capping enzyme that catalyzes two virus-specific reactions: methyltransferase and nsP1 guanylyltransferase. mRNA-capping is necessary since all viral RNAs are synthesized in the cytoplasm, and host capping enzymes are restricted to the nucleus. The enzymatic reaction involves a covalent link between 7-methyl-GMP and nsP1, whereas eukaryotic capping enzymes form a covalent complex only with GMP. nsP1 capping consists in the following reactions: GTP is first methylated into 7-methyl-GMP and then is covalently linked to nsP1 to form the m7GMp-nsP1 complex from which 7-methyl-GMP complex is transferred to the mRNA to create the cap structure. NsP1 is also needed for the initiation of the minus-strand RNAs synthesis. Probably serves as a membrane anchor for the replication complex composed of nsP1-nsP4. Palmitoylated nsP1 is remodeling host cell cytoskeleton, and induces filopodium-like structure formation at the surface of the host cell. Functionally, multifunctional protein whose N-terminus is part of the RNA polymerase complex and displays NTPase, RNA triphosphatase and helicase activities. NTPase and RNA triphosphatase are involved in viral RNA capping and helicase keeps a check on the dsRNA replication intermediates. The C-terminus harbors a protease that specifically cleaves and releases the mature proteins. Required for the shutoff of minus-strand RNAs synthesis. Specifically inhibits the host IFN response by promoting the nuclear export of host STAT1. Also inhibits host transcription by inducing rapid proteasome-dependent degradation of POLR2A, a catalytic subunit of the RNAPII complex. The resulting inhibition of cellular protein synthesis serves to ensure maximal viral gene expression and to evade host immune response. In terms of biological role, seems to be essential for minus-strand RNAs and subgenomic 26S mRNAs synthesis. Displays mono-ADP-ribosylhydrolase activity. ADP-ribosylation is a post-translational modification that controls various processes of the host cell and the virus probably needs to revert it for optimal viral replication. Binds proteins of FXR family and sequesters them into the viral RNA replication complexes thereby inhibiting the formation of host stress granules on viral mRNAs. The nsp3'-FXR complexes bind viral RNAs and probably orchestrate the assembly of viral replication complexes, thanks to the ability of FXR family members to self-assemble and bind DNA. Its function is as follows. Seems to be essential for minus-strand RNAs and subgenomic 26S mRNAs synthesis. Displays mono-ADP-ribosylhydrolase activity. ADP-ribosylation is a post-translational modification that controls various processes of the host cell and the virus probably needs to revert it for optimal viral replication. Binds proteins of G3BP family and sequesters them into the viral RNA replication complexes thereby inhibiting the formation of host stress granules on viral mRNAs. The nsp3-G3BP complexes bind viral RNAs and probably orchestrate the assembly of viral replication complexes, thanks to the ability of G3BP family members to self-assemble and bind DNA. RNA dependent RNA polymerase. Replicates genomic and antigenomic RNA by recognizing replications specific signals. The early replication complex formed by the polyprotein P123 and nsP4 synthesizes minus-strand RNAs. The late replication complex composed of fully processed nsP1-nsP4 is responsible for the production of genomic and subgenomic plus-strand RNAs. This is Polyprotein P1234 from Aedes (Middle-African hedgehog).